The chain runs to 260 residues: Snake venom serine protease KN14 (260 aa).

An N-terminal signal peptide occupies residues 1 to 18 (MVLIRVLANLLILQLSYA). A propeptide spanning residues 19–24 (QKSSEL) is cleaved from the precursor. Positions 25-251 (VIGGDECNIN…HLDWIQSIIA (227 aa)) constitute a Peptidase S1 domain. 5 disulfide bridges follow: C31–C165, C100–C258, C144–C212, C176–C191, and C202–C227. H67 (charge relay system) is an active-site residue. N105 carries N-linked (GlcNAc...) asparagine glycosylation. Catalysis depends on D112, which acts as the Charge relay system. Residue N172 is glycosylated (N-linked (GlcNAc...) asparagine). The active-site Charge relay system is S206. N-linked (GlcNAc...) asparagine glycosylation is found at N213 and N255.

The protein belongs to the peptidase S1 family. Snake venom subfamily. Monomer. As to expression, expressed by the venom gland.

The protein localises to the secreted. Its function is as follows. Snake venom serine protease that may act in the hemostasis system of the prey. The chain is Snake venom serine protease KN14 from Trimeresurus stejnegeri (Chinese green tree viper).